The chain runs to 106 residues: Transcription and mRNA export factor SUS1 (106 aa).

This sequence belongs to the ENY2 family. As to quaternary structure, component of the nuclear pore complex (NPC)-associated TREX-2 complex (transcription and export complex 2), composed of at least SUS1, SAC3, THP1, SEM1, and CDC31. TREX-2 contains 2 SUS1 chains. The TREX-2 complex interacts with the nucleoporin NUP1. Component of the 1.8 MDa SAGA transcription coactivator-HAT complex. SAGA is built of 5 distinct domains with specialized functions. Within the SAGA complex, SUS1, SGF11, SGF73 and UBP8 form an additional subcomplex of SAGA called the DUB module (deubiquitination module). Interacts directly with THP1, SAC3, SGF11, and with the RNA polymerase II.

Its subcellular location is the nucleus. The protein localises to the nucleoplasm. It is found in the cytoplasm. The protein resides in the P-body. Involved in mRNA export coupled transcription activation by association with both the TREX-2 and the SAGA complexes. At the promoters, SAGA is required for recruitment of the basal transcription machinery. It influences RNA polymerase II transcriptional activity through different activities such as TBP interaction and promoter selectivity, interaction with transcription activators, and chromatin modification through histone acetylation and deubiquitination. Within the SAGA complex, participates in a subcomplex required for deubiquitination of H2B and for the maintenance of steady-state H3 methylation levels. The TREX-2 complex functions in docking export-competent ribonucleoprotein particles (mRNPs) to the nuclear entrance of the nuclear pore complex (nuclear basket). TREX-2 participates in mRNA export and accurate chromatin positioning in the nucleus by tethering genes to the nuclear periphery. May also be involved in cytoplasmic mRNA decay by interaction with components of P-bodies. The polypeptide is Transcription and mRNA export factor SUS1 (Mycosarcoma maydis (Corn smut fungus)).